Here is a 280-residue protein sequence, read N- to C-terminus: Lacto-N-neotetraose biosynthesis glycosyltransferase LgtE (280 aa).

Belongs to the glycosyltransferase 25 family.

It functions in the pathway glycan metabolism; lacto-N-neotetraose biosynthesis. Its pathway is bacterial outer membrane biogenesis; lipooligosaccharide biosynthesis. In terms of biological role, adds the first galactose to the lacto-N-tetraose chain in lipooligosaccharide (LOS). The sequence is that of Lacto-N-neotetraose biosynthesis glycosyltransferase LgtE (lgtE) from Neisseria gonorrhoeae.